Consider the following 647-residue polypeptide: Chaperone protein DnaK (647 aa).

T198 carries the post-translational modification Phosphothreonine; by autocatalysis. Composition is skewed to basic and acidic residues over residues A514 to D529, S540 to K557, and S600 to N622. 2 disordered regions span residues A514–K557 and A596–A647. The span at V623–K632 shows a compositional bias: acidic residues. Basic and acidic residues predominate over residues E633 to A647.

It belongs to the heat shock protein 70 family.

Functionally, acts as a chaperone. The chain is Chaperone protein DnaK from Pelagibacter ubique (strain HTCC1062).